Here is a 718-residue protein sequence, read N- to C-terminus: Tensin-4 (718 aa).

A signal peptide spans 1 to 14 (MSSSLLTGGHVVSL). Disordered regions lie at residues 188–244 (RETR…GLRA) and 272–437 (LPHS…AKDM). The span at 192–207 (SSSNESLIFSGNQGRG) shows a compositional bias: polar residues. Positions 208–219 (SSPHTPSSLSNS) are enriched in low complexity. At Ser230 the chain carries Phosphoserine. Residues 272–304 (LPHSSLSSYPPSSRSLGSPASSSSSLHSLDRGS) show a composition bias toward low complexity. Composition is skewed to polar residues over residues 306-316 (CVRSSDAQVPS), 337-349 (QASS…TNSM), 367-393 (PAQQ…QATK), and 405-415 (TSPSHLCQATK). Residues 451–558 (WFKPSITREQ…ALPCKLTIPQ (108 aa)) form the SH2 domain. The 127-residue stretch at 585-711 (CHTLYLTSVS…SQVISLVTAL (127 aa)) folds into the PTB domain.

This sequence belongs to the PTEN phosphatase protein family. Interacts (via SH2 domain) with Rho GTPase-activating protein DLC1 (via C-terminus); the interaction is independent of DLC1 tyrosine phosphorylation. Interacts with integrin ITGB1; the interaction displaces tensin TNS3 from the ITGB1 cytoplasmic tail and promotes ITGB1 stability. Interacts (via SH2 domain) with E3 ubiquitin-protein ligase CBL (phosphorylated on 'Tyr-781'); the interaction is enhanced in the presence of EGF and reduces interaction of CBL with EGFR. Interacts (via SH2 domain) with receptor tyrosine kinase MET (when phosphorylated); the interaction increases MET protein stability.

Its subcellular location is the cell junction. It is found in the focal adhesion. The protein localises to the cytoplasm. The protein resides in the cytoskeleton. Promotes EGF-induced cell migration by displacing tensin TNS3 from the cytoplasmic tail of integrin ITGB1 which results in dissociation of TNS3 from focal adhesions, disassembly of actin stress fibers and initiation of cell migration. Suppresses ligand-induced degradation of EGFR by reducing EGFR ubiquitination in the presence of EGF. Increases MET protein stability by inhibiting MET endocytosis and subsequent lysosomal degradation which leads to increased cell survival, proliferation and migration. The chain is Tensin-4 (Tns4) from Rattus norvegicus (Rat).